The sequence spans 316 residues: Ribosomal RNA small subunit methyltransferase A (316 aa).

S-adenosyl-L-methionine contacts are provided by Asn-33, Val-35, Gly-60, Glu-81, Asp-110, and Asn-133.

It belongs to the class I-like SAM-binding methyltransferase superfamily. rRNA adenine N(6)-methyltransferase family. RsmA subfamily.

It is found in the cytoplasm. It carries out the reaction adenosine(1518)/adenosine(1519) in 16S rRNA + 4 S-adenosyl-L-methionine = N(6)-dimethyladenosine(1518)/N(6)-dimethyladenosine(1519) in 16S rRNA + 4 S-adenosyl-L-homocysteine + 4 H(+). Its function is as follows. Specifically dimethylates two adjacent adenosines (A1518 and A1519) in the loop of a conserved hairpin near the 3'-end of 16S rRNA in the 30S particle. May play a critical role in biogenesis of 30S subunits. The protein is Ribosomal RNA small subunit methyltransferase A of Corynebacterium jeikeium (strain K411).